Reading from the N-terminus, the 259-residue chain is Zinc import ATP-binding protein ZnuC (259 aa).

One can recognise an ABC transporter domain in the interval 11–225; sequence IRLENIYVHR…PEYLAIFGGQ (215 aa). 43-50 is a binding site for ATP; the sequence is GPNGAGKS.

It belongs to the ABC transporter superfamily. Zinc importer (TC 3.A.1.15.5) family. The complex is composed of two ATP-binding proteins (ZnuC), two transmembrane proteins (ZnuB) and a solute-binding protein (ZnuA).

The protein localises to the cell inner membrane. It carries out the reaction Zn(2+)(out) + ATP(in) + H2O(in) = Zn(2+)(in) + ADP(in) + phosphate(in) + H(+)(in). In terms of biological role, part of the ABC transporter complex ZnuABC involved in zinc import. Responsible for energy coupling to the transport system. The protein is Zinc import ATP-binding protein ZnuC of Acinetobacter baylyi (strain ATCC 33305 / BD413 / ADP1).